The following is a 185-amino-acid chain: Ribosome-recycling factor (185 aa).

The protein belongs to the RRF family.

It localises to the cytoplasm. In terms of biological role, responsible for the release of ribosomes from messenger RNA at the termination of protein biosynthesis. May increase the efficiency of translation by recycling ribosomes from one round of translation to another. This Trichlorobacter lovleyi (strain ATCC BAA-1151 / DSM 17278 / SZ) (Geobacter lovleyi) protein is Ribosome-recycling factor.